A 222-amino-acid polypeptide reads, in one-letter code: Salivary anticoagulant protein P23 (222 aa).

The N-terminal stretch at 1–17 (MLTVSLLTLSLAAYASA) is a signal peptide. N-linked (GlcNAc...) asparagine glycosylation is found at N56, N73, N109, and N114.

Salivary gland (at protein level). Adult midgut.

It is found in the secreted. Functionally, inhibits host coagulation by delaying thrombin generation and reducing endogenous thrombin potential (ETP). The sequence is that of Salivary anticoagulant protein P23 from Ixodes scapularis (Black-legged tick).